Reading from the N-terminus, the 523-residue chain is MPTVEELYRNYGILADAKDDVGQHKSAYQVILDGVKGGPKEKRLAAQFIPKFFKHFPDLSDAALNAQLDLCEDEDVSIRRQAIKELSQFATGENLPRVADILTQLLQSDDSAEFNLVNNALLSIFKMDAKGTLGGLFSQILQGEDVVRERAIKFLATKMKTLPEDILTKEVDDYIFSESKKVLYDVTGEEFVLFMKILSALKNLQTVSGRQQLVDLVSEQAGLHQTLNPADPDSVDRLLQCMRQAVPLFSKNVHSTKFVTYFCEQVLPILSSLTSPAEGIDVQLEVLKLLAEMSSFCGDMDKLESNLNKLFDKLLEFMPLPPEEVENGDSAANEEPKLQFSYVECLLFSFHQLGRKLPDFLIAKVDAEKLKDFKIRLQYFARGLQVYIRQLRLTLQGKSGDALKTEENKIKVVALKITNNINVLIKDLFHNPPSYKSTVTLSWKPVQKTDSGQKRMSDETSSTSPPKKPVVGPKRDSRQIYNPPSGKYSGNVGAFSYEQRGGFQGGRGRGWGGRGNRSRGRIY.

Residues 1 to 360 (MPTVEELYRN…HQLGRKLPDF (360 aa)) form an ARM-like and Heat-like helical repeats region. The disordered stretch occupies residues 446-523 (VQKTDSGQKR…RGNRSRGRIY (78 aa)). The short motif at 454–475 (KRMSDETSSTSPPKKPVVGPKR) is the Nuclear localization signal element. Positions 502-515 (GFQGGRGRGWGGRG) are enriched in gly residues.

The protein belongs to the API5 family. As to quaternary structure, monomer.

The protein resides in the nucleus. May be an antiapoptotic factor. The sequence is that of Apoptosis inhibitor 5-B (api5-b) from Xenopus laevis (African clawed frog).